The following is a 181-amino-acid chain: dTTP/UTP pyrophosphatase (181 aa).

Catalysis depends on Asp67, which acts as the Proton acceptor.

The protein belongs to the Maf family. YhdE subfamily. A divalent metal cation serves as cofactor.

The protein resides in the cytoplasm. The catalysed reaction is dTTP + H2O = dTMP + diphosphate + H(+). It carries out the reaction UTP + H2O = UMP + diphosphate + H(+). Nucleoside triphosphate pyrophosphatase that hydrolyzes dTTP and UTP. May have a dual role in cell division arrest and in preventing the incorporation of modified nucleotides into cellular nucleic acids. This chain is dTTP/UTP pyrophosphatase, found in Latilactobacillus sakei subsp. sakei (strain 23K) (Lactobacillus sakei subsp. sakei).